The sequence spans 435 residues: Nuclear distribution protein nudF 2 (435 aa).

The LisH domain maps to 9 to 41; sequence QAEELHKSIIAYLSANGLPETTAILRKELGVTE. WD repeat units follow at residues 86-125, 128-171, 175-214, 217-256, 280-320, 322-361, 366-396, and 397-434; these read SHRDTINCIAFHPKYSSIASGSDDCTIKIWDWELGELEVT, GHTR…KNIR, GHDHIVSAVRFIPNGSLLASASRDMDVRLWDVTNGYCVKT, GHTGWVRDVCASLDGRFILSTGDDMTVRLWDISAKPENKL, APLA…LMTL, GHDNWVRAIVFHPGGRYLLSVSDDKTLRCWDLSQEGKCVK, THGGFITCLRWAPAILKDTPTDAARALVRQI, and PDVAEIMKNATFEESFSDVQIRCVVATGSVDKKLQIFA.

It belongs to the WD repeat LIS1/nudF family. In terms of assembly, self-associates. Interacts with nudE and dynein.

It is found in the cytoplasm. The protein localises to the cytoskeleton. The protein resides in the spindle pole. Functionally, positively regulates the activity of the minus-end directed microtubule motor protein dynein. May enhance dynein-mediated microtubule sliding by targeting dynein to the microtubule plus end. Required for nuclear migration during vegetative growth as well as development. Required for retrograde early endosome (EE) transport from the hyphal tip. Required for localization of dynein to the mitotic spindle poles. Recruits additional proteins to the dynein complex at SPBs. The polypeptide is Nuclear distribution protein nudF 2 (Aspergillus clavatus (strain ATCC 1007 / CBS 513.65 / DSM 816 / NCTC 3887 / NRRL 1 / QM 1276 / 107)).